The chain runs to 353 residues: MTSAIAVDPKAAKPVGVTAGHAPAGAGKVGVLLVNLGTPDGTEFKPMWRYLREFLSDPRVIELNKAIWYPILYGLVLTTRPKKSGANYARIWNQERNESPLRTYTRAQSEKLAEALGDLPDVTVDWAMRYGNPSTASVAERLVAQGCDRILSFPLYPQYSATTTATANDQLFRALMKLRRAPAIRSVPPYYAEPVYIEALASSIERHLATLDFEPEVVITSYHGIPKPYSDKGDPYQAHCLETTRLLREKLGWDEKKLITTFQSRFGAQEWLQPYTDKTVEKLGKDGVKSIAIVNPGFSVDCIETLDEIGREAAETFHHAGGKNFAHIPCLNDSAEGMTVIEAMVRRELSGWV.

Positions 223 and 304 each coordinate Fe cation.

This sequence belongs to the ferrochelatase family.

Its subcellular location is the cytoplasm. It catalyses the reaction heme b + 2 H(+) = protoporphyrin IX + Fe(2+). The protein operates within porphyrin-containing compound metabolism; protoheme biosynthesis; protoheme from protoporphyrin-IX: step 1/1. Functionally, catalyzes the ferrous insertion into protoporphyrin IX. The polypeptide is Ferrochelatase (Mesorhizobium japonicum (strain LMG 29417 / CECT 9101 / MAFF 303099) (Mesorhizobium loti (strain MAFF 303099))).